Here is a 377-residue protein sequence, read N- to C-terminus: MNPQIRNMVEQMEPDIFVYYFNNRPILSGRNTVWLCYEVKTKDPSGPPLDANIFQGKLYPEAKDHPEMKFLHWFRKWRQLHRDQEYEVTWYVSWSPCTRCANSVATFLAEDPKVTLTIFVARLYYFWKPDYQQALRILCQERGGPHATMKIMNYNEFQHCWNEFVDGQGKPFKPRKNLPKHYTLLHATLGELLRHVMDPGTFTSNFNNKPWVSGQRETYLCYKVERSHNDTWVLLNQHRGFLRNQAPDRHGFPKGRHAELCFLDLIPFWKLDDQQYRVTCFTSWSPCFSCAQKMAKFISNNKHVSLCIFAARIYDDQGRCQEGLRTLHRDGAKIAVMNYSEFEYCWDTFVDRQGRPFQPWDGLDEHSQALSGRLRAI.

Positions 1–60 (MNPQIRNMVEQMEPDIFVYYFNNRPILSGRNTVWLCYEVKTKDPSGPPLDANIFQGKLYP) are essential for cytoplasmic localization. CMP/dCMP-type deaminase domains are found at residues 29-138 (GRNT…LRIL) and 214-327 (GQRE…LRTL). Position 32 is a phosphothreonine; by PKA (T32). Zn(2+) contacts are provided by H65, C97, and C100. A necessary for homooligomerization region spans residues 209–335 (KPWVSGQRET…TLHRDGAKIA (127 aa)). Residues 213-215 (SGQ) form an interaction with DNA region. Position 218 is a phosphothreonine; by PKA and CAMK2 (T218). Residue H257 coordinates Zn(2+). The active-site Proton donor is E259. 2 residues coordinate Zn(2+): C287 and C290. Residues 312-319 (RIYDDQGR) form an interaction with DNA region.

It belongs to the cytidine and deoxycytidylate deaminase family. In terms of assembly, homodimer. Homooligomer. Can bind RNA to form ribonucleoprotein complexes of high-molecular-mass (HMM) or low-molecular-mass (LMM). HMM is inactive and heterogeneous in protein composition because of binding nonselectively to cellular RNAs, which in turn are associated with variety of cellular proteins. The LMM form which is enzymatically active has few or no RNAs associated. Its ability to form homooligomer is distinct from its ability to assemble into HMM. Interacts with APOBEC3B, APOBEC3F, MOV10, AGO2, EIF4E, EIF4ENIF1, DCP2 and DDX6 in an RNA-dependent manner. Interacts with AGO1, AGO3 and PKA/PRKACA. It depends on Zn(2+) as a cofactor.

The protein resides in the cytoplasm. The protein localises to the nucleus. It is found in the P-body. The catalysed reaction is a 2'-deoxycytidine in single-stranded DNA + H2O + H(+) = a 2'-deoxyuridine in single-stranded DNA + NH4(+). DNA deaminase (cytidine deaminase) which acts as an inhibitor of retrovirus replication and retrotransposon mobility via deaminase-dependent and -independent mechanisms. Exhibits antiviral activity against vif-deficient: HIV-1 and simian immunodeficiency viruses (SIVs) and also simian foamy virus (SFV). After the penetration of retroviral nucleocapsids into target cells of infection and the initiation of reverse transcription, it can induce the conversion of cytosine to uracil in the minus-sense single-strand viral DNA, leading to G-to-A hypermutations in the subsequent plus-strand viral DNA. The resultant detrimental levels of mutations in the proviral genome, along with a deamination-independent mechanism that works prior to the proviral integration, together exert efficient antiretroviral effects in infected target cells. Selectively targets single-stranded DNA and does not deaminate double-stranded DNA or single- or double-stranded RNA. May inhibit the mobility of LTR retrotransposons. This chain is DNA dC-&gt;dU-editing enzyme APOBEC-3G (APOBEC3G), found in Chlorocebus aethiops (Green monkey).